The chain runs to 224 residues: Transcription cofactor HES-6 (224 aa).

Residues 1 to 31 (MAPPAAPGRDRVGREDEDGWETRGDRKARKP) form a disordered region. The segment covering 8-25 (GRDRVGREDEDGWETRGD) has biased composition (basic and acidic residues). Positions 25 to 77 (DRKARKPLVEKKRRARINESLQELRLLLAGAEVQAKLENAEVLELTVRRVQGV) constitute a bHLH domain. Positions 96–129 (FAAGYIQCMHEVHTFVSTCQAIDATVAAELLNHL) constitute an Orange domain. The span at 147–161 (DALAGPPRAPGRSGW) shows a compositional bias: low complexity. Residues 147–205 (DALAGPPRAPGRSGWPAGGAPGSPIPSPPGPGDDLCSDLEEAPEAELSQAPAEGPDLVP) are disordered. A compositionally biased stretch (acidic residues) spans 181–190 (LCSDLEEAPE). A WRPW motif motif is present at residues 221–224 (WRPW).

In terms of assembly, transcription repression requires formation of a complex with a corepressor protein of the Groucho/TLE family. Interacts with HES1.

Its subcellular location is the nucleus. In terms of biological role, does not bind DNA itself but suppresses both HES1-mediated N box-dependent transcriptional repression and binding of HES1 to E box sequences. Also suppresses HES1-mediated inhibition of the heterodimer formed by ASCL1/MASH1 and TCF3/E47, allowing ASCL1 and TCF3 to up-regulate transcription in its presence. Promotes cell differentiation. The chain is Transcription cofactor HES-6 from Homo sapiens (Human).